We begin with the raw amino-acid sequence, 116 residues long: Large ribosomal subunit protein uL18 (116 aa).

It belongs to the universal ribosomal protein uL18 family. As to quaternary structure, part of the 50S ribosomal subunit; part of the 5S rRNA/L5/L18/L25 subcomplex. Contacts the 5S and 23S rRNAs.

Functionally, this is one of the proteins that bind and probably mediate the attachment of the 5S RNA into the large ribosomal subunit, where it forms part of the central protuberance. The protein is Large ribosomal subunit protein uL18 of Teredinibacter turnerae (strain ATCC 39867 / T7901).